The chain runs to 65 residues: Large ribosomal subunit protein bL35 (65 aa).

It belongs to the bacterial ribosomal protein bL35 family.

The sequence is that of Large ribosomal subunit protein bL35 from Rubrobacter xylanophilus (strain DSM 9941 / JCM 11954 / NBRC 16129 / PRD-1).